The sequence spans 416 residues: Creatine kinase U-type, mitochondrial (416 aa).

The transit peptide at 1–39 (MAGPFSRLLSARPGLRLLALAGAGSLAAGFLLRPEPIRA) directs the protein to the mitochondrion. The interval 40–63 (ASERRRQYPPSAEYPDLRKHNNCM) is cardiolipin-binding. Positions 44-131 (RRQYPPSAEY…FDPVIQERHN (88 aa)) constitute a Phosphagen kinase N-terminal domain. Ser151 bears the Phosphoserine mark. In terms of domain architecture, Phosphagen kinase C-terminal spans 158–400 (YVLSSRVRTG…NYLIDCERRL (243 aa)). Residue 161 to 165 (SSRVR) participates in ATP binding. Ser196 is modified (phosphoserine). Residue Thr213 is modified to Phosphothreonine. His224 lines the ATP pocket. The residue at position 232 (Ser232) is a Phosphoserine. ATP contacts are provided by residues Arg269, Arg325, and 353 to 358 (RGTGGV). Thr355 carries the post-translational modification Phosphothreonine. Ser365 carries the post-translational modification Phosphoserine. Residue Asp368 participates in ATP binding.

It belongs to the ATP:guanido phosphotransferase family. In terms of assembly, exists as an octamer composed of four MTCK homodimers.

The protein localises to the mitochondrion inner membrane. It catalyses the reaction creatine + ATP = N-phosphocreatine + ADP + H(+). Functionally, reversibly catalyzes the transfer of phosphate between ATP and various phosphogens (e.g. creatine phosphate). Creatine kinase isoenzymes play a central role in energy transduction in tissues with large, fluctuating energy demands, such as skeletal muscle, heart, brain and spermatozoa. This chain is Creatine kinase U-type, mitochondrial (CKMT1), found in Sus scrofa (Pig).